A 478-amino-acid polypeptide reads, in one-letter code: Odorant receptor coreceptor (478 aa).

Topologically, residues 1–43 are cytoplasmic; it reads MNVQPTKYHGLVLDLMPNIRLMQGFGHFLFRYVNGPVLIRKLY. Residues 44-64 traverse the membrane as a helical segment; it reads SWWNLIMILLQYFAIMGNLVM. Topologically, residues 65–73 are extracellular; that stretch reads NTGDVNELT. A helical transmembrane segment spans residues 74-94; it reads ANTITTLFFTHSVTKFIYVAV. Topologically, residues 95 to 133 are cytoplasmic; that stretch reads NSEHFYRTLGIWNQPNSHSLFAESDARYHSIALAKMRKL. The helical transmembrane segment at 134–154 threads the bilayer; the sequence is LVMVMVTTVLSVVAWITITFF. Topologically, residues 155–187 are extracellular; that stretch reads GDSVKNVFDKETNETYTVEIPRLPIKAWYPWDA. The N-linked (GlcNAc...) asparagine glycan is linked to asparagine 167. Residues 188 to 208 traverse the membrane as a helical segment; the sequence is MSGVPYFFSFIYQAYFLLFSM. Residues 209–343 are Cytoplasmic-facing; it reads CQANLADVMF…VERHKHVVRL (135 aa). A helical membrane pass occupies residues 344 to 364; it reads VSAIGETYGAALLLHMLTSTI. Topologically, residues 365–382 are extracellular; it reads KLTLLAYQATKIDALNVY. Residues 383–403 traverse the membrane as a helical segment; that stretch reads GLTVIGYLVYALAQVFLFCIF. Topologically, residues 404–454 are cytoplasmic; the sequence is GNRLIEESSSVMEAAYSCHWYDGSEEAKTFVQIVCQQCQKAMTISGAKFFT. The helical transmembrane segment at 455-475 threads the bilayer; sequence VSLDLFASVLGAVVTYFMVLV. At 476–478 the chain is on the extracellular side; sequence QLK.

The protein belongs to the insect chemoreceptor superfamily. Heteromeric odorant receptor channel (TC 1.A.69) family. Orco subfamily. As to quaternary structure, heterodimer with conventional odorant receptors (ORs). Complexes exist early in the endomembrane system in olfactory sensory neurons (OSNs), coupling these complexes to the conserved ciliary trafficking pathway. Found specifically within most antennal and maxillary palp sensilla, as well as in a subset of proboscis sensilla.

Its subcellular location is the cell membrane. Odorant coreceptor which complexes with conventional odorant receptors (ORs) to form odorant-sensing units, providing sensitive and prolonged odorant signaling and calcium permeability. Orco is a universal and integral part of the functional odorant receptor, involved in the dendritic localization of other olfactory receptors. Plays a key role in preferred attraction of females for humans over non-human hosts for blood feeding. Human attraction plays a crucial role in the transmission of dengue and yellow fever by the mosquito. Also required for the response to the insect repellent IR3535; or to N,N-Diethyl-meta-toluamide (DEET), the most widely used insect repellent worldwide. The protein is Odorant receptor coreceptor (SGPRor7) of Aedes aegypti (Yellowfever mosquito).